We begin with the raw amino-acid sequence, 121 residues long: Large ribosomal subunit protein bL20 (121 aa).

The protein belongs to the bacterial ribosomal protein bL20 family.

Binds directly to 23S ribosomal RNA and is necessary for the in vitro assembly process of the 50S ribosomal subunit. It is not involved in the protein synthesizing functions of that subunit. The chain is Large ribosomal subunit protein bL20 from Roseobacter denitrificans (strain ATCC 33942 / OCh 114) (Erythrobacter sp. (strain OCh 114)).